The chain runs to 100 residues: Urease subunit gamma (100 aa).

Belongs to the urease gamma subunit family. As to quaternary structure, heterotrimer of UreA (gamma), UreB (beta) and UreC (alpha) subunits. Three heterotrimers associate to form the active enzyme.

It is found in the cytoplasm. It catalyses the reaction urea + 2 H2O + H(+) = hydrogencarbonate + 2 NH4(+). It functions in the pathway nitrogen metabolism; urea degradation; CO(2) and NH(3) from urea (urease route): step 1/1. In Paraburkholderia xenovorans (strain LB400), this protein is Urease subunit gamma.